The sequence spans 397 residues: Zinc finger CCCH domain-containing protein 33 (397 aa).

5 consecutive C3H1-type zinc fingers follow at residues R40 to D68, R85 to N113, R131 to P159, R274 to D302, and R320 to R348. The interval E361–Q397 is disordered. A compositionally biased stretch (polar residues) spans E364–Q397.

It localises to the nucleus. The polypeptide is Zinc finger CCCH domain-containing protein 33 (ZFN1) (Arabidopsis thaliana (Mouse-ear cress)).